A 281-amino-acid polypeptide reads, in one-letter code: Putative phosphatase/phosphodiesterase MPN_349 (281 aa).

Fe cation is bound by residues D12, E43, N44, and N71. Catalysis depends on H72, which acts as the Proton donor. H158, H183, and H185 together coordinate Fe cation.

Belongs to the YmdB-like family. Requires Fe(3+) as cofactor.

This Mycoplasma pneumoniae (strain ATCC 29342 / M129 / Subtype 1) (Mycoplasmoides pneumoniae) protein is Putative phosphatase/phosphodiesterase MPN_349.